The chain runs to 78 residues: UPF0270 protein YE3952 (78 aa).

This sequence belongs to the UPF0270 family.

In Yersinia enterocolitica serotype O:8 / biotype 1B (strain NCTC 13174 / 8081), this protein is UPF0270 protein YE3952.